The sequence spans 421 residues: Histidine--tRNA ligase (421 aa).

It belongs to the class-II aminoacyl-tRNA synthetase family. In terms of assembly, homodimer.

Its subcellular location is the cytoplasm. It carries out the reaction tRNA(His) + L-histidine + ATP = L-histidyl-tRNA(His) + AMP + diphosphate + H(+). The chain is Histidine--tRNA ligase from Natranaerobius thermophilus (strain ATCC BAA-1301 / DSM 18059 / JW/NM-WN-LF).